Reading from the N-terminus, the 309-residue chain is tRNA pseudouridine synthase B (309 aa).

Residue Asp39 is the Nucleophile of the active site.

The protein belongs to the pseudouridine synthase TruB family. Type 1 subfamily.

The catalysed reaction is uridine(55) in tRNA = pseudouridine(55) in tRNA. In terms of biological role, responsible for synthesis of pseudouridine from uracil-55 in the psi GC loop of transfer RNAs. The sequence is that of tRNA pseudouridine synthase B from Bacillus subtilis (strain 168).